A 542-amino-acid chain; its full sequence is Chaperonin GroEL 2 (542 aa).

ATP contacts are provided by residues 29–32 (TLGP), 86–90 (DGTTT), Gly413, 477–479 (NAA), and Asp493.

This sequence belongs to the chaperonin (HSP60) family. As to quaternary structure, forms a cylinder of 14 subunits composed of two heptameric rings stacked back-to-back. Interacts with the co-chaperonin GroES.

It localises to the cytoplasm. The catalysed reaction is ATP + H2O + a folded polypeptide = ADP + phosphate + an unfolded polypeptide.. Its function is as follows. Together with its co-chaperonin GroES, plays an essential role in assisting protein folding. The GroEL-GroES system forms a nano-cage that allows encapsulation of the non-native substrate proteins and provides a physical environment optimized to promote and accelerate protein folding. The polypeptide is Chaperonin GroEL 2 (Kineococcus radiotolerans (strain ATCC BAA-149 / DSM 14245 / SRS30216)).